The primary structure comprises 242 residues: Glutathione S-transferase 3 (242 aa).

The GST N-terminal domain maps to 1–79 (MIVLHHLKNS…HLVRKYGPSF (79 aa)). The GST C-terminal domain occupies 85-234 (DVAELEKYEL…ERYSHPPTPP (150 aa)). Ser228 bears the Phosphoserine mark. Thr232 is subject to Phosphothreonine.

This sequence belongs to the GST superfamily. Interacts with sad1.

Its subcellular location is the cytoplasm. The catalysed reaction is RX + glutathione = an S-substituted glutathione + a halide anion + H(+). In terms of biological role, may have a role in the detoxification of various heavy metals. This Schizosaccharomyces pombe (strain 972 / ATCC 24843) (Fission yeast) protein is Glutathione S-transferase 3 (gst3).